We begin with the raw amino-acid sequence, 156 residues long: Small ribosomal subunit protein uS7 (156 aa).

It belongs to the universal ribosomal protein uS7 family. As to quaternary structure, part of the 30S ribosomal subunit. Contacts proteins S9 and S11.

Its function is as follows. One of the primary rRNA binding proteins, it binds directly to 16S rRNA where it nucleates assembly of the head domain of the 30S subunit. Is located at the subunit interface close to the decoding center, probably blocks exit of the E-site tRNA. This chain is Small ribosomal subunit protein uS7, found in Pectobacterium carotovorum subsp. carotovorum (strain PC1).